A 201-amino-acid chain; its full sequence is UPF0301 protein Rleg2_0617 (201 aa).

Belongs to the UPF0301 (AlgH) family.

The protein is UPF0301 protein Rleg2_0617 of Rhizobium leguminosarum bv. trifolii (strain WSM2304).